The following is a 990-amino-acid chain: Bacteriophage adsorption protein A (990 aa).

Positions 1 to 27 (MKENNLNRVIGWSGLLLTSLLSTSALA) are cleaved as a signal peptide. 3 TPR repeats span residues 81 to 114 (IPLT…HPGD), 612 to 645 (ANAY…EPNN), and 646 to 679 (SNTQ…LPDD).

As to quaternary structure, (Microbial infection) Interacts with N4 phage non-contractile sheath protein; this interaction is essential for viral adsorption to the host.

The protein localises to the cell outer membrane. Its function is as follows. (Microbial infection) Allows N4 phage attachment by binding to the viral non-contractile sheath protein. This Escherichia coli (strain K12) protein is Bacteriophage adsorption protein A (nfrA).